We begin with the raw amino-acid sequence, 305 residues long: Protein MFI (305 aa).

In terms of assembly, can homodimerize. Interacts with MFF; the interaction inhibits MFF interaction with DNM1L.

It is found in the cytoplasm. The protein resides in the cytosol. It localises to the mitochondrion outer membrane. Functionally, acts as an inhibitor of mitochondrial fission. Interacts with MFF and prevents DNM1L recruitment to mitochondria, promoting a more fused mitochondrial network. This is Protein MFI from Rattus norvegicus (Rat).